Consider the following 424-residue polypeptide: Protein TUNICAMYCIN INDUCED 1 (424 aa).

Residues 1–25 (MGHRVLVYVGALFLILFTIFPSSSA) form the signal peptide. Asn197, Asn296, and Asn406 each carry an N-linked (GlcNAc...) asparagine glycan.

Restricted to pollen grains at high levels.

The protein resides in the endoplasmic reticulum. Functionally, involved in the regulation of pollen surface morphology, probably by modulating the secretion of proteins and/or lipids during pollen development. The protein is Protein TUNICAMYCIN INDUCED 1 of Arabidopsis thaliana (Mouse-ear cress).